A 166-amino-acid polypeptide reads, in one-letter code: Crossover junction endodeoxyribonuclease RuvC (166 aa).

Catalysis depends on residues aspartate 7, glutamate 68, and aspartate 141. Positions 7, 68, and 141 each coordinate Mg(2+).

Belongs to the RuvC family. As to quaternary structure, homodimer which binds Holliday junction (HJ) DNA. The HJ becomes 2-fold symmetrical on binding to RuvC with unstacked arms; it has a different conformation from HJ DNA in complex with RuvA. In the full resolvosome a probable DNA-RuvA(4)-RuvB(12)-RuvC(2) complex forms which resolves the HJ. The cofactor is Mg(2+).

It localises to the cytoplasm. It carries out the reaction Endonucleolytic cleavage at a junction such as a reciprocal single-stranded crossover between two homologous DNA duplexes (Holliday junction).. Its function is as follows. The RuvA-RuvB-RuvC complex processes Holliday junction (HJ) DNA during genetic recombination and DNA repair. Endonuclease that resolves HJ intermediates. Cleaves cruciform DNA by making single-stranded nicks across the HJ at symmetrical positions within the homologous arms, yielding a 5'-phosphate and a 3'-hydroxyl group; requires a central core of homology in the junction. The consensus cleavage sequence is 5'-(A/T)TT(C/G)-3'. Cleavage occurs on the 3'-side of the TT dinucleotide at the point of strand exchange. HJ branch migration catalyzed by RuvA-RuvB allows RuvC to scan DNA until it finds its consensus sequence, where it cleaves and resolves the cruciform DNA. In Caldicellulosiruptor saccharolyticus (strain ATCC 43494 / DSM 8903 / Tp8T 6331), this protein is Crossover junction endodeoxyribonuclease RuvC.